The primary structure comprises 81 residues: ATP synthase subunit c (81 aa).

The next 2 membrane-spanning stretches (helical) occupy residues 5 to 25 (IAAG…IGAG) and 57 to 77 (VGLV…FVFA).

Belongs to the ATPase C chain family. F-type ATPases have 2 components, F(1) - the catalytic core - and F(0) - the membrane proton channel. F(1) has five subunits: alpha(3), beta(3), gamma(1), delta(1), epsilon(1). F(0) has three main subunits: a(1), b(2) and c(10-14). The alpha and beta chains form an alternating ring which encloses part of the gamma chain. F(1) is attached to F(0) by a central stalk formed by the gamma and epsilon chains, while a peripheral stalk is formed by the delta and b chains.

The protein resides in the cell membrane. Functionally, f(1)F(0) ATP synthase produces ATP from ADP in the presence of a proton or sodium gradient. F-type ATPases consist of two structural domains, F(1) containing the extramembraneous catalytic core and F(0) containing the membrane proton channel, linked together by a central stalk and a peripheral stalk. During catalysis, ATP synthesis in the catalytic domain of F(1) is coupled via a rotary mechanism of the central stalk subunits to proton translocation. Its function is as follows. Key component of the F(0) channel; it plays a direct role in translocation across the membrane. A homomeric c-ring of between 10-14 subunits forms the central stalk rotor element with the F(1) delta and epsilon subunits. This is ATP synthase subunit c from Mycobacterium sp. (strain JLS).